The primary structure comprises 325 residues: Cyclic AMP-responsive element-binding protein 1 (325 aa).

2 stretches are compositionally biased toward polar residues: residues 1–11 and 18–27; these read MESGAENQQSG and AESQQMTVQA. Disordered stretches follow at residues 1 to 27 and 92 to 111; these read MESGAENQQSGDAAVTEAESQQMTVQA and SEDSQESVDSVTDSQKRREI. Residues 85 to 144 enclose the KID domain; sequence QISTIAESEDSQESVDSVTDSQKRREILSRRPSYRKILNDLSSDAPGVPRIEEEKSEEET. At Ser-117 the chain carries Phosphoserine; by CaMK1, CaMK2, CaMK4, PKB/AKT1 or PKB/AKT2, RPS6KA3, RPS6KA4, RPS6KA5 and SGK1. Lys-120 is covalently cross-linked (Glycyl lysine isopeptide (Lys-Gly) (interchain with G-Cter in SUMO2)). Positions 124–146 are disordered; sequence DLSSDAPGVPRIEEEKSEEETSA. Ser-126 carries the post-translational modification Phosphoserine; by CaMK2. Position 255 is a phosphoserine; by HIPK2 (Ser-255). A bZIP domain is found at 267–325; the sequence is ARKREVRLMKNREAARECRRKKKEYVKCLENRVAVLENQNKTLIEELKALKDLYCHKSD. The tract at residues 268 to 293 is basic motif; it reads RKREVRLMKNREAARECRRKKKEYVK. Glycyl lysine isopeptide (Lys-Gly) (interchain with G-Cter in SUMO1) cross-links involve residues Lys-269 and Lys-288. Residues 295–316 form a leucine-zipper region; sequence LENRVAVLENQNKTLIEELKAL.

This sequence belongs to the bZIP family. Interacts with PPRC1. Binds DNA as a dimer. This dimer is stabilized by magnesium ions. Interacts, through the bZIP domain, with the coactivators CRTC1/TORC1, CRTC2/TORC2 and CRTC3/TORC3. When phosphorylated on Ser-117, binds CREBBP. Interacts with CREBL2; regulates CREB1 phosphorylation, stability and transcriptional activity. Interacts (phosphorylated form) with TOX3. Interacts with ARRB1. Binds to HIPK2. Interacts with SGK1. Interacts with TSSK4; this interaction facilitates phosphorylation on Ser-117. Forms a complex with KMT2A and CREBBP. Interacts with TOX4; CREB1 is required for full induction of TOX4-dependent activity and the interaction is increased by cAMP and inhibited by insulin. Sumoylated with SUMO1. Sumoylation on Lys-288, but not on Lys-269, is required for nuclear localization of this protein. Sumoylation is enhanced under hypoxia, promoting nuclear localization and stabilization. In terms of processing, stimulated by phosphorylation. Phosphorylation of both Ser-117 and Ser-126 in the SCN regulates the activity of CREB and participates in circadian rhythm generation. Phosphorylation of Ser-117 allows CREBBP binding. Phosphorylated upon calcium influx by CaMK4 and CaMK2 on Ser-117. CaMK4 is much more potent than CaMK2 in activating CREB. Phosphorylated by CaMK2 on Ser-126. Phosphorylation of Ser-126 blocks CREB-mediated transcription even when Ser-117 is phosphorylated. Phosphorylated by CaMK1. Phosphorylation of Ser-255 by HIPK2 in response to genotoxic stress promotes CREB1 activity, facilitating the recruitment of the coactivator CBP. Phosphorylated at Ser-117 by RPS6KA3, RPS6KA4 and RPS6KA5 in response to mitogenic or stress stimuli. CREBL2 positively regulates phosphorylation at Ser-117 thereby stimulating CREB1 transcriptional activity. In liver, phosphorylation is induced by fasting or glucagon in a circadian fashion. Phosphorylated by TSSK4 on Ser-117.

It localises to the nucleus. In terms of biological role, phosphorylation-dependent transcription factor that stimulates transcription upon binding to the DNA cAMP response element (CRE), a sequence present in many viral and cellular promoters. Transcription activation is enhanced by the TORC coactivators which act independently of Ser-117 phosphorylation. Involved in different cellular processes including the synchronization of circadian rhythmicity and the differentiation of adipose cells. Regulates the expression of apoptotic and inflammatory response factors in cardiomyocytes in response to ERFE-mediated activation of AKT signaling. The polypeptide is Cyclic AMP-responsive element-binding protein 1 (CREB1) (Bos taurus (Bovine)).